Consider the following 159-residue polypeptide: Phosphopantetheine adenylyltransferase (159 aa).

Threonine 10 is a substrate binding site. Residues threonine 10–phenylalanine 11 and histidine 18 each bind ATP. Substrate-binding residues include lysine 42, methionine 74, and arginine 88. ATP-binding positions include glycine 89–arginine 91, glutamate 99, and tryptophan 124–serine 130.

Belongs to the bacterial CoaD family. In terms of assembly, homohexamer. Mg(2+) serves as cofactor.

The protein localises to the cytoplasm. The catalysed reaction is (R)-4'-phosphopantetheine + ATP + H(+) = 3'-dephospho-CoA + diphosphate. It participates in cofactor biosynthesis; coenzyme A biosynthesis; CoA from (R)-pantothenate: step 4/5. Reversibly transfers an adenylyl group from ATP to 4'-phosphopantetheine, yielding dephospho-CoA (dPCoA) and pyrophosphate. The polypeptide is Phosphopantetheine adenylyltransferase (Cronobacter sakazakii (strain ATCC BAA-894) (Enterobacter sakazakii)).